The primary structure comprises 165 residues: Ubiquitin-fold modifier-conjugating enzyme 1 (165 aa).

Catalysis depends on cysteine 117, which acts as the Glycyl thioester intermediate.

The protein belongs to the ubiquitin-conjugating enzyme family. UFC1 subfamily.

E2-like enzyme which forms an intermediate with UFM1 via a thioester linkage. This Brugia malayi (Filarial nematode worm) protein is Ubiquitin-fold modifier-conjugating enzyme 1.